The sequence spans 492 residues: Ferruginol synthase (492 aa).

A helical membrane pass occupies residues 1–21 (MDPFPLVAAALFIAATWFITF). C436 serves as a coordination point for heme.

The protein belongs to the cytochrome P450 family. It depends on heme as a cofactor. Expressed in leaf glandular trichomes.

Its subcellular location is the membrane. It carries out the reaction abieta-8,11,13-triene + reduced [NADPH--hemoprotein reductase] + O2 = ferruginol + oxidized [NADPH--hemoprotein reductase] + H2O + H(+). The enzyme catalyses ferruginol + reduced [NADPH--hemoprotein reductase] + O2 = 11-hydroxyferruginol + oxidized [NADPH--hemoprotein reductase] + H2O + H(+). It catalyses the reaction miltiradiene + 2 reduced [NADPH--hemoprotein reductase] + 2 O2 = 11-oxomiltiradiene + 2 oxidized [NADPH--hemoprotein reductase] + 3 H2O + 2 H(+). It participates in secondary metabolite biosynthesis; terpenoid biosynthesis. Its function is as follows. Monooxygenase involved in the biosynthesis of labdane-related diterpenes natural products. Catalyzes the oxidation of abietatriene to produce ferruginol. Catalyzes the oxidation of ferruginol at C-12 to produce 11-hydroxyferruginol. Ferruginol and 11-hydroxyferruginol are intermediates in the biosynthesis of carnosate, a potent antioxidant. May also convert miltiradiene into 11-oxomiltiradiene. The polypeptide is Ferruginol synthase (Salvia fruticosa (Greek sage)).